We begin with the raw amino-acid sequence, 137 residues long: Hydrogenase-4 component J (137 aa).

This sequence to E.coli HycH.

Its function is as follows. Possible component of hydrogenase 4. This chain is Hydrogenase-4 component J, found in Escherichia coli (strain K12).